A 227-amino-acid chain; its full sequence is 2-C-methyl-D-erythritol 4-phosphate cytidylyltransferase (227 aa).

This sequence belongs to the IspD/TarI cytidylyltransferase family. IspD subfamily.

The catalysed reaction is 2-C-methyl-D-erythritol 4-phosphate + CTP + H(+) = 4-CDP-2-C-methyl-D-erythritol + diphosphate. Its pathway is isoprenoid biosynthesis; isopentenyl diphosphate biosynthesis via DXP pathway; isopentenyl diphosphate from 1-deoxy-D-xylulose 5-phosphate: step 2/6. Catalyzes the formation of 4-diphosphocytidyl-2-C-methyl-D-erythritol from CTP and 2-C-methyl-D-erythritol 4-phosphate (MEP). The protein is 2-C-methyl-D-erythritol 4-phosphate cytidylyltransferase of Mycobacterium marinum (strain ATCC BAA-535 / M).